A 264-amino-acid polypeptide reads, in one-letter code: GTP cyclohydrolase FolE2 (264 aa).

It belongs to the GTP cyclohydrolase IV family.

The enzyme catalyses GTP + H2O = 7,8-dihydroneopterin 3'-triphosphate + formate + H(+). It participates in cofactor biosynthesis; 7,8-dihydroneopterin triphosphate biosynthesis; 7,8-dihydroneopterin triphosphate from GTP: step 1/1. Converts GTP to 7,8-dihydroneopterin triphosphate. This chain is GTP cyclohydrolase FolE2, found in Nitratidesulfovibrio vulgaris (strain ATCC 29579 / DSM 644 / CCUG 34227 / NCIMB 8303 / VKM B-1760 / Hildenborough) (Desulfovibrio vulgaris).